We begin with the raw amino-acid sequence, 364 residues long: UDP-N-acetylglucosamine--N-acetylmuramyl-(pentapeptide) pyrophosphoryl-undecaprenol N-acetylglucosamine transferase 1 (364 aa).

UDP-N-acetyl-alpha-D-glucosamine is bound by residues 10 to 12, Asn124, Ser195, Ile250, and Gln295; that span reads TGG.

This sequence belongs to the glycosyltransferase 28 family. MurG subfamily.

It is found in the cell membrane. It carries out the reaction di-trans,octa-cis-undecaprenyl diphospho-N-acetyl-alpha-D-muramoyl-L-alanyl-D-glutamyl-meso-2,6-diaminopimeloyl-D-alanyl-D-alanine + UDP-N-acetyl-alpha-D-glucosamine = di-trans,octa-cis-undecaprenyl diphospho-[N-acetyl-alpha-D-glucosaminyl-(1-&gt;4)]-N-acetyl-alpha-D-muramoyl-L-alanyl-D-glutamyl-meso-2,6-diaminopimeloyl-D-alanyl-D-alanine + UDP + H(+). Its pathway is cell wall biogenesis; peptidoglycan biosynthesis. Cell wall formation. Catalyzes the transfer of a GlcNAc subunit on undecaprenyl-pyrophosphoryl-MurNAc-pentapeptide (lipid intermediate I) to form undecaprenyl-pyrophosphoryl-MurNAc-(pentapeptide)GlcNAc (lipid intermediate II). The sequence is that of UDP-N-acetylglucosamine--N-acetylmuramyl-(pentapeptide) pyrophosphoryl-undecaprenol N-acetylglucosamine transferase 1 from Bacillus thuringiensis subsp. konkukian (strain 97-27).